The following is a 382-amino-acid chain: O-methyltransferase okaF (382 aa).

The S-adenosyl-L-methionine site is built by Glu-249 and Arg-287. His-291 acts as the Proton acceptor in catalysis.

The protein belongs to the class I-like SAM-binding methyltransferase superfamily. Cation-independent O-methyltransferase family.

It catalyses the reaction 3-desmethyl okaramine B + S-adenosyl-L-methionine = okaramine B + S-adenosyl-L-homocysteine + H(+). The protein operates within alkaloid biosynthesis. O-methyltransferase; part of the gene cluster that mediates the biosynthesis of okaramine B, a prenylated indole alkaloid that possesses an unusual octacyclic ring system, including a four-membered azetidine ring and an eight-membered azocine ring, and that exhibits insecticidal activity against silkworm larvae. Within the pathway, okaF catalyzes the last step which is the methylation of 3-desmethyl okaramine B to produce okaramine B. With okaG, OkaF is also able to produce okaramine D from okaramine E. The biosynthesis begins with the NRPS okaA that condenses two tryptophan molecules into cyclo(L-Trp-L-Trp). Prenylation by the prenyltransferase okaC then leads to the formation of cyclo(N8-(alpha,alpha-dimethylallyl)-L-Trp-6a-(alpha,alpha-dime-thylallyl)-L-Trp). This is followed by indole 2,3-epoxidation by the FAD-dependent monooxygenase okaB to facilitate the formation of the hexahydropyrrolo[2,3-b]indole (HPI) moiety of okaramine C. The cytochrome P450 monooxygenase okaD then likely catalyzes formation of the eight-membered ring of okaramine A. The dioxygenase okaE further forms the unusual 2-dimethyl-3-methyl-azetidine ring to yield 12-deshydroxyl okaramine E, as well as the hydroxylation of 12-deshydroxyl okaramine E to produce okaramine E. The cytochrome P450 monoxygenase okaG converts 12-deshydroxyl okaramine E into 3-desmethyl okaramine B which is further methylated by the methyltransferase okaF into okaramine B. In a shunt pathway, okaG and okaF together are also able to convert okaramine E into okaramine D. Okaramine H is produced by nonenzymatic conversion from okaramine A. The protein is O-methyltransferase okaF of Penicillium ochrochloron.